The following is a 914-amino-acid chain: Inter-alpha-trypsin inhibitor heavy chain H1 (914 aa).

The N-terminal stretch at 1-30 is a signal peptide; that stretch reads MDGAAVGLRVLLGLGLVSLLTLEAMPAAWG. The propeptide occupies 31–36; it reads LATTGR. A VIT domain is found at 39 to 168; sequence AREKRQAVDT…KATFQLTYEE (130 aa). C62 is a glycosylation site (S-linked (Hex...) cysteine). A Phosphoserine modification is found at S131. N288 and N291 each carry an N-linked (GlcNAc...) asparagine glycan. The region spanning 293-453 is the VWFA domain; that stretch reads SKNLVFVIDI…FNFLEVMSME (161 aa). Residues T405 and T410 each carry the phosphothreonine modification. N-linked (GlcNAc...) asparagine glycosylation is present at N591. O-linked (GalNAc...) threonine glycosylation occurs at T656. Residue D675 is modified to Aspartate 1-(chondroitin 4-sulfate)-ester. Positions 676 to 914 are excised as a propeptide; that stretch reads PHFIIYVPQK…HTDYIVPDIF (239 aa).

The protein belongs to the ITIH family. I-alpha-I plasma protease inhibitors are assembled from one or two heavy chains (HC) and one light chain, bikunin. Inter-alpha-inhibitor (I-alpha-I) is composed of ITIH1/HC1, ITIH2/HC2 and bikunin. Interacts with TNFAIP6 (via Link and CUB domains). Heavy chains are linked to bikunin via chondroitin 4-sulfate esterified to the alpha-carboxyl of the C-terminal aspartate after propeptide cleavage. In terms of processing, the S-linked glycan is composed of two 6-carbon sugars, possibly Glc or Gal.

Its subcellular location is the secreted. Functionally, may act as a carrier of hyaluronan in serum or as a binding protein between hyaluronan and other matrix protein, including those on cell surfaces in tissues to regulate the localization, synthesis and degradation of hyaluronan which are essential to cells undergoing biological processes. The polypeptide is Inter-alpha-trypsin inhibitor heavy chain H1 (ITIH1) (Mesocricetus auratus (Golden hamster)).